Reading from the N-terminus, the 148-residue chain is MKIFVDGDGSPVKETVIEVAVEKALDVVIVTSVDHYSLKDYPENVSFVYVDKGADAADFKIVQLIKKGDLLITQDYGLASLVLPKGVLVLHQLGYQYTKENIDGLLEQRYFSGQIRRKGGRTKGPKPFTDQDRTTFKQALIELVKRSL.

Belongs to the UPF0178 family.

In Enterococcus faecalis (strain ATCC 700802 / V583), this protein is UPF0178 protein EF_0842.